A 324-amino-acid chain; its full sequence is Concanavalin B (324 aa).

Positions 1 to 25 (MGCERKALILMVVIWIMSFWTLSLA) are cleaved as a signal peptide. One can recognise a GH18 domain in the interval 30-311 (TEIAVYWGQR…TNIIRYLNAT (282 aa)). The N-linked (GlcNAc...) asparagine glycan is linked to N309.

Belongs to the glycosyl hydrolase 18 family.

In terms of biological role, may act as a carbohydrate-binding protein. This is Concanavalin B from Canavalia ensiformis (Jack bean).